The following is a 921-amino-acid chain: Valine--tRNA ligase (921 aa).

The 'HIGH' region motif lies at 40-50; that stretch reads PNVTGSLHMGH. Positions 522–526 match the 'KMSKS' region motif; that stretch reads KMSKS. Lys-525 is a binding site for ATP. A coiled-coil region spans residues 849–921; the sequence is MADLIDKEAE…LQHKNRIESL (73 aa).

It belongs to the class-I aminoacyl-tRNA synthetase family. ValS type 1 subfamily. Monomer.

Its subcellular location is the cytoplasm. The enzyme catalyses tRNA(Val) + L-valine + ATP = L-valyl-tRNA(Val) + AMP + diphosphate. Catalyzes the attachment of valine to tRNA(Val). As ValRS can inadvertently accommodate and process structurally similar amino acids such as threonine, to avoid such errors, it has a 'posttransfer' editing activity that hydrolyzes mischarged Thr-tRNA(Val) in a tRNA-dependent manner. This is Valine--tRNA ligase from Legionella pneumophila (strain Paris).